The following is a 508-amino-acid chain: Bifunctional purine biosynthesis protein PurH (508 aa).

The MGS-like domain occupies 1 to 145 (MTKRALISVS…KNHQYVTVIV (145 aa)).

This sequence belongs to the PurH family.

The enzyme catalyses (6R)-10-formyltetrahydrofolate + 5-amino-1-(5-phospho-beta-D-ribosyl)imidazole-4-carboxamide = 5-formamido-1-(5-phospho-D-ribosyl)imidazole-4-carboxamide + (6S)-5,6,7,8-tetrahydrofolate. The catalysed reaction is IMP + H2O = 5-formamido-1-(5-phospho-D-ribosyl)imidazole-4-carboxamide. It participates in purine metabolism; IMP biosynthesis via de novo pathway; 5-formamido-1-(5-phospho-D-ribosyl)imidazole-4-carboxamide from 5-amino-1-(5-phospho-D-ribosyl)imidazole-4-carboxamide (10-formyl THF route): step 1/1. It functions in the pathway purine metabolism; IMP biosynthesis via de novo pathway; IMP from 5-formamido-1-(5-phospho-D-ribosyl)imidazole-4-carboxamide: step 1/1. The sequence is that of Bifunctional purine biosynthesis protein PurH from Lysinibacillus sphaericus (strain C3-41).